The primary structure comprises 491 residues: Acetyl-coenzyme A carboxylase carboxyl transferase subunit beta, chloroplastic (491 aa).

The 268-residue stretch at 224 to 491 (LWIQCENCYG…FFPLNPKKIK (268 aa)) folds into the CoA carboxyltransferase N-terminal domain. The Zn(2+) site is built by Cys-228, Cys-231, Cys-247, and Cys-250. A C4-type zinc finger spans residues 228-250 (CENCYGLNYKKNLKSKINICEQC).

The protein belongs to the AccD/PCCB family. Acetyl-CoA carboxylase is a heterohexamer composed of biotin carboxyl carrier protein, biotin carboxylase and 2 subunits each of ACCase subunit alpha and ACCase plastid-coded subunit beta (accD). Requires Zn(2+) as cofactor.

Its subcellular location is the plastid. The protein resides in the chloroplast stroma. It carries out the reaction N(6)-carboxybiotinyl-L-lysyl-[protein] + acetyl-CoA = N(6)-biotinyl-L-lysyl-[protein] + malonyl-CoA. It participates in lipid metabolism; malonyl-CoA biosynthesis; malonyl-CoA from acetyl-CoA: step 1/1. Functionally, component of the acetyl coenzyme A carboxylase (ACC) complex. Biotin carboxylase (BC) catalyzes the carboxylation of biotin on its carrier protein (BCCP) and then the CO(2) group is transferred by the transcarboxylase to acetyl-CoA to form malonyl-CoA. This chain is Acetyl-coenzyme A carboxylase carboxyl transferase subunit beta, chloroplastic, found in Vitis vinifera (Grape).